A 288-amino-acid chain; its full sequence is uncharacterized protein (288 aa).

Positions 1-12 (MTEGRCAQHPDG) are enriched in basic and acidic residues. A disordered region spans residues 1 to 20 (MTEGRCAQHPDGLDVQDVCD).

Belongs to the class IV-like SAM-binding methyltransferase superfamily. RNA methyltransferase TrmH family.

This is an uncharacterized protein from Mycobacterium tuberculosis (strain ATCC 25618 / H37Rv).